Here is a 261-residue protein sequence, read N- to C-terminus: Cytosolic Fe-S cluster assembly factor Nubp2 homolog (261 aa).

14–21 serves as a coordination point for ATP; the sequence is GKGGVGKS. Residues Cys188 and Cys191 each contribute to the [4Fe-4S] cluster site.

This sequence belongs to the Mrp/NBP35 ATP-binding proteins family. NUBP2/CFD1 subfamily. In terms of assembly, heterotetramer of 2 Nubp1 and 2 Nubp2 chains. [4Fe-4S] cluster serves as cofactor.

It is found in the cytoplasm. In terms of biological role, component of the cytosolic iron-sulfur (Fe/S) protein assembly (CIA) machinery. Required for maturation of extramitochondrial Fe-S proteins. The Nubp1-Nubp2 heterotetramer forms a Fe-S scaffold complex, mediating the de novo assembly of an Fe-S cluster and its transfer to target apoproteins. The polypeptide is Cytosolic Fe-S cluster assembly factor Nubp2 homolog (Drosophila willistoni (Fruit fly)).